We begin with the raw amino-acid sequence, 231 residues long: S-norcoclaurine synthase 1 (231 aa).

107–109 lines the dopamine pocket; it reads YKE. Lysine 121 (proton donor) is an active-site residue. Aspartate 140 contributes to the (4-hydroxyphenyl)acetaldehyde binding site. A helical membrane pass occupies residues 210–230; that stretch reads LLLCLIICLVIAGGMFVAGVP.

This sequence belongs to the BetVI family. Detected in roots, stems, leaves, flower buds and germinating seeds.

The protein localises to the membrane. It catalyses the reaction (4-hydroxyphenyl)acetaldehyde + dopamine = (S)-norcoclaurine + H2O. It functions in the pathway alkaloid biosynthesis; (S)-reticuline biosynthesis. Its activity is regulated as follows. Activity doubles within 5 hours of elicitor treatment and continues to increase for at least 80 hours. Its function is as follows. Involved in the biosynthesis of (S)-coclaurine, the common precursor of all benzylisoquinoline alkaloids such as morphine, sanguinarine, codeine or papaverine. Condenses dopamine and 4-hydroxyphenylacetaldehyde. In Papaver somniferum (Opium poppy), this protein is S-norcoclaurine synthase 1.